The sequence spans 473 residues: Photosystem II CP43 reaction center protein (473 aa).

Residues 1 to 14 constitute a propeptide that is removed on maturation; that stretch reads MKTLYSLRRFYHVE. Thr15 is modified (N-acetylthreonine). Thr15 is modified (phosphothreonine). 5 helical membrane passes run 69–93, 134–155, 178–200, 255–275, and 291–312; these read LFEV…PHLA, LLGP…KDRN, KALY…RKIT, KPFA…LSYS, and WFNN…ASQA. Glu367 contacts [CaMn4O5] cluster. The chain crosses the membrane as a helical span at residues 447–471; it reads RARAAAAGFEKGIDRDFEPVLSMTP.

The protein belongs to the PsbB/PsbC family. PsbC subfamily. In terms of assembly, PSII is composed of 1 copy each of membrane proteins PsbA, PsbB, PsbC, PsbD, PsbE, PsbF, PsbH, PsbI, PsbJ, PsbK, PsbL, PsbM, PsbT, PsbX, PsbY, PsbZ, Psb30/Ycf12, at least 3 peripheral proteins of the oxygen-evolving complex and a large number of cofactors. It forms dimeric complexes. Binds multiple chlorophylls and provides some of the ligands for the Ca-4Mn-5O cluster of the oxygen-evolving complex. It may also provide a ligand for a Cl- that is required for oxygen evolution. PSII binds additional chlorophylls, carotenoids and specific lipids. is required as a cofactor.

It localises to the plastid. It is found in the chloroplast thylakoid membrane. Functionally, one of the components of the core complex of photosystem II (PSII). It binds chlorophyll and helps catalyze the primary light-induced photochemical processes of PSII. PSII is a light-driven water:plastoquinone oxidoreductase, using light energy to abstract electrons from H(2)O, generating O(2) and a proton gradient subsequently used for ATP formation. This is Photosystem II CP43 reaction center protein from Phaseolus vulgaris (Kidney bean).